The chain runs to 124 residues: Ribonuclease VapC32 (124 aa).

Residues 2–112 (ILVDTSVWIE…TRDKRLKAAC (111 aa)) enclose the PINc domain. Asp5 and Asp86 together coordinate Mg(2+).

The protein belongs to the PINc/VapC protein family. Mg(2+) serves as cofactor.

Its function is as follows. Toxic component of a type II toxin-antitoxin (TA) system. An RNase. Its toxic effect is neutralized by coexpression with cognate antitoxin VapB32. The protein is Ribonuclease VapC32 of Mycobacterium tuberculosis (strain CDC 1551 / Oshkosh).